Reading from the N-terminus, the 197-residue chain is Probable UbiX-like flavin prenyltransferase (197 aa).

FMN-binding positions include 9 to 11 (GAT), serine 36, 87 to 90 (SMKT), and arginine 122.

The protein belongs to the UbiX/PAD1 family. YclB subfamily. In terms of assembly, homododecamer.

It catalyses the reaction dimethylallyl phosphate + FMNH2 = prenylated FMNH2 + phosphate. Its function is as follows. Flavin prenyltransferase that catalyzes the synthesis of the prenylated FMN cofactor (prenyl-FMN) for phenolic acid decarboxylase C. Involved in the decarboxylation and detoxification of phenolic derivatives under both aerobic and anaerobic conditions. The polypeptide is Probable UbiX-like flavin prenyltransferase (ecdB) (Escherichia coli O111:H-).